Reading from the N-terminus, the 482-residue chain is tRNA sulfurtransferase (482 aa).

A THUMP domain is found at 61 to 165; it reads LAIRDALTRI…DDRLLLIKGR (105 aa). Residues 183–184, K265, G287, and Q296 each bind ATP; that span reads LI. An intrachain disulfide couples C344 to C456. The region spanning 404–482 is the Rhodanese domain; the sequence is FGANDVILDI…GFANVKVYRP (79 aa). Catalysis depends on C456, which acts as the Cysteine persulfide intermediate.

This sequence belongs to the ThiI family.

The protein resides in the cytoplasm. It catalyses the reaction [ThiI sulfur-carrier protein]-S-sulfanyl-L-cysteine + a uridine in tRNA + 2 reduced [2Fe-2S]-[ferredoxin] + ATP + H(+) = [ThiI sulfur-carrier protein]-L-cysteine + a 4-thiouridine in tRNA + 2 oxidized [2Fe-2S]-[ferredoxin] + AMP + diphosphate. It carries out the reaction [ThiS sulfur-carrier protein]-C-terminal Gly-Gly-AMP + S-sulfanyl-L-cysteinyl-[cysteine desulfurase] + AH2 = [ThiS sulfur-carrier protein]-C-terminal-Gly-aminoethanethioate + L-cysteinyl-[cysteine desulfurase] + A + AMP + 2 H(+). It functions in the pathway cofactor biosynthesis; thiamine diphosphate biosynthesis. Catalyzes the ATP-dependent transfer of a sulfur to tRNA to produce 4-thiouridine in position 8 of tRNAs, which functions as a near-UV photosensor. Also catalyzes the transfer of sulfur to the sulfur carrier protein ThiS, forming ThiS-thiocarboxylate. This is a step in the synthesis of thiazole, in the thiamine biosynthesis pathway. The sulfur is donated as persulfide by IscS. This is tRNA sulfurtransferase from Salmonella agona (strain SL483).